The sequence spans 78 residues: MSKVCIVTGKRPATGNNVSHAQNKTKRRFLPNLHAHRFWVESENRYIKLRVSSKGMRIIDKKGIDTVLSDLRAQGHKI.

Belongs to the bacterial ribosomal protein bL28 family.

The chain is Large ribosomal subunit protein bL28 from Francisella tularensis subsp. holarctica (strain FTNF002-00 / FTA).